A 486-amino-acid chain; its full sequence is Protein nucleotidyltransferase YdiU (486 aa).

ATP-binding residues include G90, G92, R93, K113, D125, G126, R176, and R183. Residue D252 is the Proton acceptor of the active site. Positions 253 and 262 each coordinate Mg(2+). Position 262 (D262) interacts with ATP.

This sequence belongs to the SELO family. Mg(2+) serves as cofactor. Mn(2+) is required as a cofactor.

The catalysed reaction is L-seryl-[protein] + ATP = 3-O-(5'-adenylyl)-L-seryl-[protein] + diphosphate. The enzyme catalyses L-threonyl-[protein] + ATP = 3-O-(5'-adenylyl)-L-threonyl-[protein] + diphosphate. It catalyses the reaction L-tyrosyl-[protein] + ATP = O-(5'-adenylyl)-L-tyrosyl-[protein] + diphosphate. It carries out the reaction L-histidyl-[protein] + UTP = N(tele)-(5'-uridylyl)-L-histidyl-[protein] + diphosphate. The catalysed reaction is L-seryl-[protein] + UTP = O-(5'-uridylyl)-L-seryl-[protein] + diphosphate. The enzyme catalyses L-tyrosyl-[protein] + UTP = O-(5'-uridylyl)-L-tyrosyl-[protein] + diphosphate. Functionally, nucleotidyltransferase involved in the post-translational modification of proteins. It can catalyze the addition of adenosine monophosphate (AMP) or uridine monophosphate (UMP) to a protein, resulting in modifications known as AMPylation and UMPylation. This Pseudomonas putida (strain GB-1) protein is Protein nucleotidyltransferase YdiU.